A 151-amino-acid polypeptide reads, in one-letter code: D-aminoacyl-tRNA deacylase (151 aa).

A Gly-cisPro motif, important for rejection of L-amino acids motif is present at residues 136–137 (GP).

Belongs to the DTD family. Homodimer.

It is found in the cytoplasm. It catalyses the reaction glycyl-tRNA(Ala) + H2O = tRNA(Ala) + glycine + H(+). The catalysed reaction is a D-aminoacyl-tRNA + H2O = a tRNA + a D-alpha-amino acid + H(+). Functionally, an aminoacyl-tRNA editing enzyme that deacylates mischarged D-aminoacyl-tRNAs. Also deacylates mischarged glycyl-tRNA(Ala), protecting cells against glycine mischarging by AlaRS. Acts via tRNA-based rather than protein-based catalysis; rejects L-amino acids rather than detecting D-amino acids in the active site. By recycling D-aminoacyl-tRNA to D-amino acids and free tRNA molecules, this enzyme counteracts the toxicity associated with the formation of D-aminoacyl-tRNA entities in vivo and helps enforce protein L-homochirality. In Lactococcus lactis subsp. lactis (strain IL1403) (Streptococcus lactis), this protein is D-aminoacyl-tRNA deacylase.